The following is a 76-amino-acid chain: uncharacterized protein (76 aa).

This is an uncharacterized protein from Thermoproteus tenax virus 1 (strain KRA1) (TTV1).